The sequence spans 378 residues: Chaperone protein DnaJ (378 aa).

Positions aspartate 6–glycine 70 constitute a J domain. The CR-type zinc-finger motif lies at glycine 137–lysine 219. Residues cysteine 150, cysteine 153, cysteine 167, cysteine 170, cysteine 193, cysteine 196, cysteine 207, and cysteine 210 each contribute to the Zn(2+) site. CXXCXGXG motif repeat units lie at residues cysteine 150 to glycine 157, cysteine 167 to glycine 174, cysteine 193 to glycine 200, and cysteine 207 to glycine 214.

This sequence belongs to the DnaJ family. Homodimer. Zn(2+) is required as a cofactor.

The protein localises to the cytoplasm. Its function is as follows. Participates actively in the response to hyperosmotic and heat shock by preventing the aggregation of stress-denatured proteins and by disaggregating proteins, also in an autonomous, DnaK-independent fashion. Unfolded proteins bind initially to DnaJ; upon interaction with the DnaJ-bound protein, DnaK hydrolyzes its bound ATP, resulting in the formation of a stable complex. GrpE releases ADP from DnaK; ATP binding to DnaK triggers the release of the substrate protein, thus completing the reaction cycle. Several rounds of ATP-dependent interactions between DnaJ, DnaK and GrpE are required for fully efficient folding. Also involved, together with DnaK and GrpE, in the DNA replication of plasmids through activation of initiation proteins. The protein is Chaperone protein DnaJ of Lactobacillus delbrueckii subsp. bulgaricus (strain ATCC 11842 / DSM 20081 / BCRC 10696 / JCM 1002 / NBRC 13953 / NCIMB 11778 / NCTC 12712 / WDCM 00102 / Lb 14).